A 141-amino-acid chain; its full sequence is Transmembrane protein 216 (141 aa).

4 helical membrane passes run 15–35 (ILFF…LLIF), 49–69 (LVLD…RLFF), 82–102 (LGIS…YLLL), and 115–135 (SILL…LATF).

As to quaternary structure, part of the tectonic-like complex (also named B9 complex). Interacts with TMEM107.

The protein localises to the membrane. It localises to the cytoplasm. The protein resides in the cytoskeleton. It is found in the cilium basal body. In terms of biological role, part of the tectonic-like complex which is required for tissue-specific ciliogenesis and may regulate ciliary membrane composition. In Rattus norvegicus (Rat), this protein is Transmembrane protein 216 (Tmem216).